Here is a 437-residue protein sequence, read N- to C-terminus: Aspartic proteinase nepenthesin-1 (437 aa).

Positions methionine 1–serine 24 are cleaved as a signal peptide. The propeptide at threonine 25–leucine 78 is activation peptide. N-linked (GlcNAc...) asparagine glycosylation is found at asparagine 53 and asparagine 98. Residues tyrosine 95–alanine 430 form the Peptidase A1 domain. Aspartate 113 is a catalytic residue. Disulfide bonds link cysteine 123/cysteine 126, cysteine 129/cysteine 203, cysteine 150/cysteine 168, cysteine 155/cysteine 163, cysteine 240/cysteine 434, and cysteine 354/cysteine 395. Asparagine 131 carries an N-linked (GlcNAc...) asparagine glycan. Asparagine 198, asparagine 267, and asparagine 307 each carry an N-linked (GlcNAc...) asparagine glycan. Residue aspartate 315 is part of the active site. N-linked (GlcNAc...) asparagine glycosylation is present at asparagine 345.

Belongs to the peptidase A1 family.

It localises to the secreted. The catalysed reaction is Similar to pepsin, but also cleaves on either side of Asp and at Lys-|-Arg.. Inhibited by pepstatin and by diazoacetyl-D,L-norleucine methyl ester (DAN) in the presence of Cu(2+) ions. Extracellular proteinase found in the pitcher fluid of carnivorous plants. Digest prey for nitrogen uptake. This is Aspartic proteinase nepenthesin-1 (nep1) from Nepenthes gracilis (Slender pitcher plant).